The primary structure comprises 223 residues: Small ribosomal subunit protein uS3 (223 aa).

Residues 38-106 (IRKFLDEKLK…QVHINIVEIK (69 aa)) enclose the KH type-2 domain.

Belongs to the universal ribosomal protein uS3 family. In terms of assembly, part of the 30S ribosomal subunit. Forms a tight complex with proteins S10 and S14.

Functionally, binds the lower part of the 30S subunit head. Binds mRNA in the 70S ribosome, positioning it for translation. This chain is Small ribosomal subunit protein uS3, found in Lactobacillus delbrueckii subsp. bulgaricus (strain ATCC 11842 / DSM 20081 / BCRC 10696 / JCM 1002 / NBRC 13953 / NCIMB 11778 / NCTC 12712 / WDCM 00102 / Lb 14).